The primary structure comprises 317 residues: Olfactory receptor 10A5 (317 aa).

At 1–26 the chain is on the extracellular side; sequence MAIGNWTEISEFILMSFSSLPTEIQS. N5 is a glycosylation site (N-linked (GlcNAc...) asparagine). A helical membrane pass occupies residues 27 to 47; sequence LLFLTFLTIYLVTLKGNSLII. Over 48–55 the chain is Cytoplasmic; the sequence is LVTLADPM. The helical transmembrane segment at 56-76 threads the bilayer; it reads LHSPMYFFLRNLSFLEIGFNL. Residues 77 to 100 are Extracellular-facing; the sequence is VIVPKMLGTLLAQDTTISFLGCAT. C98 and C190 are joined by a disulfide. Residues 101 to 121 traverse the membrane as a helical segment; it reads QMYFFFFFGVAECFLLATMAY. Residues 122-140 lie on the Cytoplasmic side of the membrane; it reads DRYVAICSPLHYPVIMNQR. A helical transmembrane segment spans residues 141-161; it reads TRAKLAAASWFPGFPVATVQT. The Extracellular portion of the chain corresponds to 162–198; sequence TWLFSFPFCGTNKVNHFFCDSPPVLKLVCADTALFEI. Residues 199-218 form a helical membrane-spanning segment; it reads YAIVGTILVVMIPCLLILCS. Over 219–238 the chain is Cytoplasmic; that stretch reads YTRIAAAILKIPSAKGKHKA. A helical transmembrane segment spans residues 239-259; that stretch reads FSTCSSHLLVVSLFYISSSLT. Residues 260 to 272 lie on the Extracellular side of the membrane; it reads YFWPKSNNSPESK. A helical membrane pass occupies residues 273-293; that stretch reads KLLSLSYTVVTPMLNPIIYSL. The Cytoplasmic portion of the chain corresponds to 294-317; it reads RNSEVKNALSRTFHKVLALRNCIP.

This sequence belongs to the G-protein coupled receptor 1 family. As to expression, expressed in the tongue.

The protein localises to the cell membrane. Its function is as follows. Odorant receptor (Potential). May be involved in taste perception. The polypeptide is Olfactory receptor 10A5 (OR10A5) (Homo sapiens (Human)).